The primary structure comprises 337 residues: MSIDIDIIKARAKNEYRLSKVRGEAMISVRIPGGILPAHLLTVARDIAETWGNGQIHLTTRQKLAMPGIRYEDIDNVNAALEPFLREIEIELCDVQVEDTKAGYLAIGGRNIVACQGNRICQKANTDTTGLSRRLEKLVYPSPYHLKTVIVGCPNDCAKASMADLGIIGVAKMRFTADRCIGCGACVKACSHHAVGCLALKNGKAVKEESACIGCGECVLACPTLAWQRKPDQLWQVRLGGRTSKKTPRVGKLFLNWVTEDVIKQVIVNLYEFEKEMLGGKPIYLHMGHLIDKGGYLRFKERVLRGVQLNPEAMVAERIYWAEDESVARMHLKPAGH.

Residues C115, C121, C153, C157, C180, C183, C186, C190, C212, C215, C218, and C222 each coordinate [4Fe-4S] cluster. C157 is a binding site for siroheme. 4Fe-4S ferredoxin-type domains lie at 171-200 (AKMR…CLAL) and 203-232 (GKAV…RKPD).

It belongs to the nitrite and sulfite reductase 4Fe-4S domain family. As to quaternary structure, the anaerobic sulfite reductase seems to consist of three subunits. The cofactor is [4Fe-4S] cluster. It depends on siroheme as a cofactor.

It localises to the cytoplasm. The catalysed reaction is hydrogen sulfide + 3 NAD(+) + 3 H2O = sulfite + 3 NADH + 4 H(+). Its pathway is sulfur metabolism; sulfite reduction. Its function is as follows. This enzyme catalyzes the hydrogen sulfide production from sulfite. It is strictly anaerobic. It is regulated by electron acceptors rather than by cysteine. This chain is Anaerobic sulfite reductase subunit C (asrC), found in Salmonella typhi.